We begin with the raw amino-acid sequence, 156 residues long: Small ribosomal subunit protein uS7 (156 aa).

The protein belongs to the universal ribosomal protein uS7 family. Part of the 30S ribosomal subunit. Contacts proteins S9 and S11.

Functionally, one of the primary rRNA binding proteins, it binds directly to 16S rRNA where it nucleates assembly of the head domain of the 30S subunit. Is located at the subunit interface close to the decoding center, probably blocks exit of the E-site tRNA. This is Small ribosomal subunit protein uS7 from Streptococcus gordonii (strain Challis / ATCC 35105 / BCRC 15272 / CH1 / DL1 / V288).